Consider the following 487-residue polypeptide: Protein nucleotidyltransferase YdiU (487 aa).

ATP contacts are provided by G90, G92, R93, K113, D125, G126, R176, and R183. D252 (proton acceptor) is an active-site residue. Positions 253 and 262 each coordinate Mg(2+). D262 contacts ATP.

It belongs to the SELO family. The cofactor is Mg(2+). Mn(2+) serves as cofactor.

The enzyme catalyses L-seryl-[protein] + ATP = 3-O-(5'-adenylyl)-L-seryl-[protein] + diphosphate. The catalysed reaction is L-threonyl-[protein] + ATP = 3-O-(5'-adenylyl)-L-threonyl-[protein] + diphosphate. It carries out the reaction L-tyrosyl-[protein] + ATP = O-(5'-adenylyl)-L-tyrosyl-[protein] + diphosphate. It catalyses the reaction L-histidyl-[protein] + UTP = N(tele)-(5'-uridylyl)-L-histidyl-[protein] + diphosphate. The enzyme catalyses L-seryl-[protein] + UTP = O-(5'-uridylyl)-L-seryl-[protein] + diphosphate. The catalysed reaction is L-tyrosyl-[protein] + UTP = O-(5'-uridylyl)-L-tyrosyl-[protein] + diphosphate. Its function is as follows. Nucleotidyltransferase involved in the post-translational modification of proteins. It can catalyze the addition of adenosine monophosphate (AMP) or uridine monophosphate (UMP) to a protein, resulting in modifications known as AMPylation and UMPylation. The chain is Protein nucleotidyltransferase YdiU from Pseudomonas fluorescens (strain Pf0-1).